Reading from the N-terminus, the 591-residue chain is Protein kinase C zeta type (591 aa).

The region spanning 15 to 98 (RVRLKAHYSG…DGLILHVFPS (84 aa)) is the PB1 domain. An interaction with SQSTM1 region spans residues 79–145 (AFRLAGQHRD…KRFNRRAYCG (67 aa)). A Phorbol-ester/DAG-type zinc finger spans residues 130–180 (GHLFQAKRFNRRAYCGQCSERIWGLARQGYRCINCKLLVHKRCHGLVPLTC). A Protein kinase domain is found at 251 to 517 (FDLIRVIGRG…FSDIKSHAFF (267 aa)). Residues 257–265 (IGRGSYAKV) and Lys280 each bind ATP. The active-site Proton acceptor is Asp375. Phosphothreonine; by PDPK1 and PI3K is present on Thr409. Residues 518–589 (RSIDWDLLEK…INPLLLSTEE (72 aa)) form the AGC-kinase C-terminal domain. Thr559 carries the post-translational modification Phosphothreonine. Position 590 is a phosphoserine (Ser590).

It belongs to the protein kinase superfamily. AGC Ser/Thr protein kinase family. PKC subfamily. In terms of assembly, interacts with PARD6A, PARD6B and PARD6G. Part of a complex with PARD3, PARD6A or PARD6B or PARD6G and CDC42 or RAC1. Interacts with ADAP1/CENTA1. Interacts directly with SQSTM1. Forms a ternary complex with SQSTM1 and KCNAB2. Forms another ternary complex with SQSTM1 and GABRR3. Forms a complex with SQSTM1 and MAP2K5. Interacts (via the protein kinase domain) with WWC1. Forms a tripartite complex with WWC1 and DDR1, but predominantly in the absence of collagen. Component of the Par polarity complex, composed of at least phosphorylated PRKCZ, PARD3 and TIAM1. Interacts with PDPK1 (via N-terminal region). Interacts with WDFY2 (via WD repeats 1-3). Interacts with VAMP2. Forms a complex with WDFY2 and VAMP2. Interacts with APPL1. Interacts with WWC1, WWC2 and WWC3. CDH5 is required for its phosphorylation at Thr-409. Phosphorylated by protein kinase PDPK1; phosphorylation is inhibited by the apoptotic C-terminal cleavage product of PKN2. Phosphorylation at Thr-409 by PI3K activates the kinase.

The protein localises to the cytoplasm. The protein resides in the endosome. It is found in the cell junction. Its subcellular location is the membrane. It catalyses the reaction L-seryl-[protein] + ATP = O-phospho-L-seryl-[protein] + ADP + H(+). It carries out the reaction L-threonyl-[protein] + ATP = O-phospho-L-threonyl-[protein] + ADP + H(+). With respect to regulation, atypical PKCs (PRKCI and PRKCZ) exhibit an elevated basal enzymatic activity (that may be due to the interaction with SMG1 or SQSTM1) and are not regulated by diacylglycerol, phosphatidylserine, phorbol esters or calcium ions. Two specific sites, Thr-409 (activation loop of the kinase domain) and Thr-559 (turn motif), need to be phosphorylated for its full activation. Phosphatidylinositol 3,4,5-trisphosphate might be a physiological activator. Calcium- and diacylglycerol-independent serine/threonine-protein kinase that functions in phosphatidylinositol 3-kinase (PI3K) pathway and mitogen-activated protein (MAP) kinase cascade, and is involved in NF-kappa-B activation, mitogenic signaling, cell proliferation, cell polarity, inflammatory response and maintenance of long-term potentiation (LTP). Upon lipopolysaccharide (LPS) treatment in macrophages, or following mitogenic stimuli, functions downstream of PI3K to activate MAP2K1/MEK1-MAPK1/ERK2 signaling cascade independently of RAF1 activation. Required for insulin-dependent activation of AKT3, but may function as an adapter rather than a direct activator. Upon insulin treatment may act as a downstream effector of PI3K and contribute to the activation of translocation of the glucose transporter SLC2A4/GLUT4 and subsequent glucose transport in adipocytes. In EGF-induced cells, binds and activates MAP2K5/MEK5-MAPK7/ERK5 independently of its kinase activity and can activate JUN promoter through MEF2C. Through binding with SQSTM1/p62, functions in interleukin-1 signaling and activation of NF-kappa-B with the specific adapters RIPK1 and TRAF6. Participates in TNF-dependent transactivation of NF-kappa-B by phosphorylating and activating IKBKB kinase, which in turn leads to the degradation of NF-kappa-B inhibitors. In migrating astrocytes, forms a cytoplasmic complex with PARD6A and is recruited by CDC42 to function in the establishment of cell polarity along with the microtubule motor and dynein. In association with FEZ1, stimulates neuronal differentiation in PC12 cells. In the inflammatory response, is required for the T-helper 2 (Th2) differentiation process, including interleukin production, efficient activation of JAK1 and the subsequent phosphorylation and nuclear translocation of STAT6. May be involved in development of allergic airway inflammation (asthma), a process dependent on Th2 immune response. In the NF-kappa-B-mediated inflammatory response, can relieve SETD6-dependent repression of NF-kappa-B target genes by phosphorylating the RELA subunit at 'Ser-311'. Phosphorylates VAMP2 in vitro. Phosphorylates and activates LRRK1, which phosphorylates RAB proteins involved in intracellular trafficking. The chain is Protein kinase C zeta type (PRKCZ) from Oryctolagus cuniculus (Rabbit).